Consider the following 100-residue polypeptide: MAEEHNHNHEEENIIWITNEEGKEEAFEILFDFDSEDFDKSYVLYFPAGKSEDEEIEILASSYIQDEEGKQGQLKPVETDEEWDMIEEILATFLADEDEE.

This sequence belongs to the UPF0473 family.

The protein is UPF0473 protein lwe1514 of Listeria welshimeri serovar 6b (strain ATCC 35897 / DSM 20650 / CCUG 15529 / CIP 8149 / NCTC 11857 / SLCC 5334 / V8).